A 243-amino-acid polypeptide reads, in one-letter code: Carboxy-S-adenosyl-L-methionine synthase (243 aa).

Residues Tyr40, 65–67 (GCS), 90–91 (DN), 118–119 (DI), Asn133, and Arg200 contribute to the S-adenosyl-L-methionine site.

It belongs to the class I-like SAM-binding methyltransferase superfamily. Cx-SAM synthase family. As to quaternary structure, homodimer.

The enzyme catalyses prephenate + S-adenosyl-L-methionine = carboxy-S-adenosyl-L-methionine + 3-phenylpyruvate + H2O. Catalyzes the conversion of S-adenosyl-L-methionine (SAM) to carboxy-S-adenosyl-L-methionine (Cx-SAM). This is Carboxy-S-adenosyl-L-methionine synthase from Shewanella sediminis (strain HAW-EB3).